The following is a 358-amino-acid chain: tRNA N6-adenosine threonylcarbamoyltransferase (358 aa).

Fe cation-binding residues include His-122 and His-126. Residues 145–149 (LVSGG), Asp-178, Gly-191, and Asn-287 each bind substrate. Asp-315 contributes to the Fe cation binding site.

The protein belongs to the KAE1 / TsaD family. Requires Fe(2+) as cofactor.

Its subcellular location is the cytoplasm. The catalysed reaction is L-threonylcarbamoyladenylate + adenosine(37) in tRNA = N(6)-L-threonylcarbamoyladenosine(37) in tRNA + AMP + H(+). In terms of biological role, required for the formation of a threonylcarbamoyl group on adenosine at position 37 (t(6)A37) in tRNAs that read codons beginning with adenine. Is involved in the transfer of the threonylcarbamoyl moiety of threonylcarbamoyl-AMP (TC-AMP) to the N6 group of A37, together with TsaE and TsaB. TsaD likely plays a direct catalytic role in this reaction. The sequence is that of tRNA N6-adenosine threonylcarbamoyltransferase from Hydrogenovibrio crunogenus (strain DSM 25203 / XCL-2) (Thiomicrospira crunogena).